Consider the following 491-residue polypeptide: Probable cytosol aminopeptidase (491 aa).

2 residues coordinate Mn(2+): Lys264 and Asp269. Lys276 is a catalytic residue. Positions 287, 346, and 348 each coordinate Mn(2+). The active site involves Arg350.

Belongs to the peptidase M17 family. The cofactor is Mn(2+).

The protein resides in the cytoplasm. It carries out the reaction Release of an N-terminal amino acid, Xaa-|-Yaa-, in which Xaa is preferably Leu, but may be other amino acids including Pro although not Arg or Lys, and Yaa may be Pro. Amino acid amides and methyl esters are also readily hydrolyzed, but rates on arylamides are exceedingly low.. The enzyme catalyses Release of an N-terminal amino acid, preferentially leucine, but not glutamic or aspartic acids.. In terms of biological role, presumably involved in the processing and regular turnover of intracellular proteins. Catalyzes the removal of unsubstituted N-terminal amino acids from various peptides. This is Probable cytosol aminopeptidase from Xylella fastidiosa (strain Temecula1 / ATCC 700964).